The sequence spans 860 residues: Ubiquitin carboxyl-terminal hydrolase 13 (860 aa).

A UBP-type; degenerate zinc finger spans residues 168 to 276 (QVSRHARSLR…EHLLHFGIDM (109 aa)). Residues Cys192, Cys195, Cys212, and His225 each coordinate Zn(2+). The region spanning 318 to 857 (TGIKNLGNSC…LGYMYFYRRL (540 aa)) is the USP domain. Catalysis depends on Cys327, which acts as the Nucleophile. The tract at residues 611-636 (DLTPPIVIPEDTRDSSTNNSLESPEI) is disordered. UBA domains are found at residues 635 to 676 (EIDE…IIAH) and 710 to 750 (QPPE…IFTH). Residues 755-768 (DESEAMSDTADTEP) show a composition bias toward acidic residues. Positions 755–795 (DESEAMSDTADTEPNDNSFSNANAHTDSSLSPDQDLSSPRV) are disordered. The span at 769 to 780 (NDNSFSNANAHT) shows a compositional bias: polar residues. Residues 781 to 793 (DSSLSPDQDLSSP) show a composition bias toward low complexity. Catalysis depends on His819, which acts as the Proton acceptor.

The protein belongs to the peptidase C19 family.

The enzyme catalyses Thiol-dependent hydrolysis of ester, thioester, amide, peptide and isopeptide bonds formed by the C-terminal Gly of ubiquitin (a 76-residue protein attached to proteins as an intracellular targeting signal).. Its activity is regulated as follows. Specifically inhibited by spautin-1 (specific and potent autophagy inhibitor-1), a derivative of MBCQ that binds to usp13 and inhibits deubiquitinase activity. Its function is as follows. Deubiquitinase that mediates deubiquitination of target proteins and is involved in various processes such as autophagy and endoplasmic reticulum-associated degradation (ERAD). This chain is Ubiquitin carboxyl-terminal hydrolase 13 (usp13), found in Danio rerio (Zebrafish).